The primary structure comprises 237 residues: 1-(5-phosphoribosyl)-5-[(5-phosphoribosylamino)methylideneamino] imidazole-4-carboxamide isomerase (237 aa).

D8 acts as the Proton acceptor in catalysis. D130 (proton donor) is an active-site residue.

It belongs to the HisA/HisF family.

The protein resides in the cytoplasm. The enzyme catalyses 1-(5-phospho-beta-D-ribosyl)-5-[(5-phospho-beta-D-ribosylamino)methylideneamino]imidazole-4-carboxamide = 5-[(5-phospho-1-deoxy-D-ribulos-1-ylimino)methylamino]-1-(5-phospho-beta-D-ribosyl)imidazole-4-carboxamide. It functions in the pathway amino-acid biosynthesis; L-histidine biosynthesis; L-histidine from 5-phospho-alpha-D-ribose 1-diphosphate: step 4/9. This is 1-(5-phosphoribosyl)-5-[(5-phosphoribosylamino)methylideneamino] imidazole-4-carboxamide isomerase from Caldicellulosiruptor bescii (strain ATCC BAA-1888 / DSM 6725 / KCTC 15123 / Z-1320) (Anaerocellum thermophilum).